We begin with the raw amino-acid sequence, 349 residues long: Peroxidase 7 (349 aa).

The N-terminal stretch at 1–22 (MKLAVVSVVVILGVLVAWPVSA) is a signal peptide. 4 disulfide bridges follow: C60–C136, C93–C98, C142–C341, and C220–C252. H91 acts as the Proton acceptor in catalysis. The Ca(2+) site is built by D92, V95, G97, D99, and S101. Residue P183 participates in substrate binding. H213 serves as a coordination point for heme b. T214 provides a ligand contact to Ca(2+). N-linked (GlcNAc...) asparagine glycosylation occurs at N231. Residues D262, T265, and D270 each coordinate Ca(2+).

This sequence belongs to the peroxidase family. Classical plant (class III) peroxidase subfamily. Requires heme b as cofactor. Ca(2+) serves as cofactor.

The protein resides in the secreted. The enzyme catalyses 2 a phenolic donor + H2O2 = 2 a phenolic radical donor + 2 H2O. Removal of H(2)O(2), oxidation of toxic reductants, biosynthesis and degradation of lignin, suberization, auxin catabolism, response to environmental stresses such as wounding, pathogen attack and oxidative stress. These functions might be dependent on each isozyme/isoform in each plant tissue. The sequence is that of Peroxidase 7 (PER7) from Arabidopsis thaliana (Mouse-ear cress).